A 428-amino-acid chain; its full sequence is Chaperone SurA (428 aa).

The first 13 residues, 1–13, serve as a signal peptide directing secretion; sequence MLGALLLSGAVHA. PpiC domains lie at 164–265 and 276–375; these read SEEF…KLLE and RDEV…EVLG.

Its subcellular location is the periplasm. The catalysed reaction is [protein]-peptidylproline (omega=180) = [protein]-peptidylproline (omega=0). Its function is as follows. Chaperone involved in the correct folding and assembly of outer membrane proteins. Recognizes specific patterns of aromatic residues and the orientation of their side chains, which are found more frequently in integral outer membrane proteins. May act in both early periplasmic and late outer membrane-associated steps of protein maturation. This Pseudomonas savastanoi pv. phaseolicola (strain 1448A / Race 6) (Pseudomonas syringae pv. phaseolicola (strain 1448A / Race 6)) protein is Chaperone SurA.